A 332-amino-acid chain; its full sequence is Ribosomal RNA small subunit methyltransferase H (332 aa).

Residues 39-41 (GGY), D56, F83, D100, and Q107 contribute to the S-adenosyl-L-methionine site.

Belongs to the methyltransferase superfamily. RsmH family.

The protein localises to the cytoplasm. The catalysed reaction is cytidine(1402) in 16S rRNA + S-adenosyl-L-methionine = N(4)-methylcytidine(1402) in 16S rRNA + S-adenosyl-L-homocysteine + H(+). Specifically methylates the N4 position of cytidine in position 1402 (C1402) of 16S rRNA. This Bartonella grahamii (strain as4aup) protein is Ribosomal RNA small subunit methyltransferase H.